The primary structure comprises 61 residues: Large ribosomal subunit protein uL30 (61 aa).

This sequence belongs to the universal ribosomal protein uL30 family. As to quaternary structure, part of the 50S ribosomal subunit.

The chain is Large ribosomal subunit protein uL30 from Bordetella avium (strain 197N).